We begin with the raw amino-acid sequence, 210 residues long: Probable GTP-binding protein EngB (210 aa).

In terms of domain architecture, EngB-type G spans 25–199; the sequence is CGIEVAFAGR…RQKLDSWFSE (175 aa). Residues 33–40, 60–64, 78–81, 145–148, and 178–180 contribute to the GTP site; these read GRSNAGKS, GRTQL, DLPG, TKAD, and FSS. Mg(2+) is bound by residues Ser-40 and Thr-62.

This sequence belongs to the TRAFAC class TrmE-Era-EngA-EngB-Septin-like GTPase superfamily. EngB GTPase family. The cofactor is Mg(2+).

Functionally, necessary for normal cell division and for the maintenance of normal septation. In Salmonella agona (strain SL483), this protein is Probable GTP-binding protein EngB.